Consider the following 1383-residue polypeptide: MTSYSFTEKKRIRKDFGKQRSILEVPFLLAIQVDSYREFLQEDVEPNKRKDLGLHAALKSVFPISSYSGNAALEYVGYKLGQPVFDERECRQRGMSYGAPLRVTVRLVIYDRESSTKAIKYVKEQEVYLGEIPLMTGNGTFIVNGTERVIVSQLHRSPGVFFDHDRGKTHSSGKLLYSARIIPYRGSWLDFEFDPKDALFTRIDRRRKLPVSILLRALGYSNEEMLAEFFEINTFHINPDEGVQLELVPERLRGETLNFDLADGDKVIVEAGKRITARHVKQLEAAGVAALAVPDDYLVGRILSHDVVDGSTGELLANANDEINEDQLAAFRKAGVDAVGTLWVNDLDRGPYLSNTLRIDPTKTQLEALVEIYRMMRPGEPPTKEAAQNLFHNLFFTFERYDLSTVGRMKFNRRVGRKDVLGESVLYDKKYFAERNDEESKRLVAEHADTSDILEVIKVLTEIRNGRGVVDDIDHLGNRRVRSVGEMAENVFRVGLVRVERAVKERLSMAESEGLTPQELINAKPVAAAIKEFFGSSQLSQFMDQNNPLSEVTHKRRVSALGPGGLTRERAGFEVRDVHPTHYGRVCTIETPEGPNIGLINSLAVFARTNQYGFLETPYRKVLDGKVSDDVEYLSAIEENEYVIAQANALTDAKNMLTEQFVPCRFQGESLLKPPSEVHFMDVSPMQTVSVAAALVPFLEHDDANRALMGANMQRQAVPTLRSQKPLVGTGIERAVARDSGVTVNALRGGVIEQIDAARIVVKVNEAEIGGGTDAGVDIYNLIKYTRSNQNTCINQRPLVNVGDVIARGDVLADGPSTDIGELALGQNMLIAFMPWNGYNFEDSILLSERVVEEDRYTTIHIEELTCVARDTKLGPEEISADIPNVSEQALNRLDESGVVYIGAEVRAGDIMVGKVTPKGESQLTPEEKLLRAIFGEKASDVKDSSLRVPPGMDGTVIDVQVFTRDGIEKDKRARQIEESEIKRVKKDFDDQFRILEAAIYARLRSQIVGKVANGGANLKKGDTVTDAYLDGLKKSDWFQLRMKDEDAADAIERAQKQIQAHEKEFEARFADKRGKITQGDDLAPGVLKMVKVFLAVKRRIQPGDKMAGRHGNKGVVSNVVPVEDMPYMATGESVDIVLNPLGVPSRMNIGQILEVHLGWAAKGLGRKIQRMLEAQAAVSELRKFLNDIYNHDNAINAQRVDLSQFSDEELLNLGKNLIDGVPMATPVFDGASEAEIKRMLELADLPQSGQTQLYDGRTGEAFDRKTTVGYMHYLKLNHLVDDKMHARSTGPYSLVTQQPLGGKAQFGGQRFGEMEVWALEAYGAAYTLQEMLTVKSDDVQGRNQMYKNIVDGEHEMVAGMPESFNVLVKEIRSLAINMELEE.

The protein belongs to the RNA polymerase beta chain family. The RNAP catalytic core consists of 2 alpha, 1 beta, 1 beta' and 1 omega subunit. When a sigma factor is associated with the core the holoenzyme is formed, which can initiate transcription.

It carries out the reaction RNA(n) + a ribonucleoside 5'-triphosphate = RNA(n+1) + diphosphate. Its function is as follows. DNA-dependent RNA polymerase catalyzes the transcription of DNA into RNA using the four ribonucleoside triphosphates as substrates. The chain is DNA-directed RNA polymerase subunit beta from Xanthomonas axonopodis pv. citri (strain 306).